The sequence spans 174 residues: Fimbria A protein (174 aa).

Residues 1 to 22 (MKLNKIMLATVLAFGVSSLANA) form the signal peptide. Residues Cys41 and Cys80 are joined by a disulfide bond.

It belongs to the fimbrial protein family.

Its subcellular location is the fimbrium. Major structural component of mannose-resistant fimbriae of Serratia marcescens. The protein is Fimbria A protein (smfA) of Serratia marcescens.